Reading from the N-terminus, the 401-residue chain is Ribosomal RNA dihydrouridine synthase (401 aa).

Positions 15, 34, 35, 41, 47, 52, 132, 371, and 384 each coordinate FAD.

The protein belongs to the BaiN/RdsA family. RdsA subfamily. FAD serves as cofactor.

The catalysed reaction is a 5,6-dihydrouridine in mRNA + NAD(+) = a uridine in mRNA + NADH + H(+). Its function is as follows. Catalyzes the synthesis of 5,6-dihydrouridine (D) at position 2449 in 23S rRNA. This Haemophilus influenzae (strain ATCC 51907 / DSM 11121 / KW20 / Rd) protein is Ribosomal RNA dihydrouridine synthase.